The following is a 355-amino-acid chain: Histidinol-phosphate aminotransferase (355 aa).

At Lys-218 the chain carries N6-(pyridoxal phosphate)lysine.

Belongs to the class-II pyridoxal-phosphate-dependent aminotransferase family. Histidinol-phosphate aminotransferase subfamily. Homodimer. Pyridoxal 5'-phosphate is required as a cofactor.

It catalyses the reaction L-histidinol phosphate + 2-oxoglutarate = 3-(imidazol-4-yl)-2-oxopropyl phosphate + L-glutamate. It participates in amino-acid biosynthesis; L-histidine biosynthesis; L-histidine from 5-phospho-alpha-D-ribose 1-diphosphate: step 7/9. The protein is Histidinol-phosphate aminotransferase of Chlorobium limicola (strain DSM 245 / NBRC 103803 / 6330).